Reading from the N-terminus, the 387-residue chain is Exodeoxyribonuclease 7 large subunit (387 aa).

The protein belongs to the XseA family. In terms of assembly, heterooligomer composed of large and small subunits.

Its subcellular location is the cytoplasm. The catalysed reaction is Exonucleolytic cleavage in either 5'- to 3'- or 3'- to 5'-direction to yield nucleoside 5'-phosphates.. Bidirectionally degrades single-stranded DNA into large acid-insoluble oligonucleotides, which are then degraded further into small acid-soluble oligonucleotides. The polypeptide is Exodeoxyribonuclease 7 large subunit (Campylobacter jejuni subsp. jejuni serotype O:23/36 (strain 81-176)).